We begin with the raw amino-acid sequence, 300 residues long: 1D-myo-inositol 2-acetamido-2-deoxy-alpha-D-glucopyranoside deacetylase (300 aa).

The Zn(2+) site is built by histidine 13, aspartate 16, and histidine 147.

The protein belongs to the MshB deacetylase family. Zn(2+) serves as cofactor.

It catalyses the reaction 1D-myo-inositol 2-acetamido-2-deoxy-alpha-D-glucopyranoside + H2O = 1D-myo-inositol 2-amino-2-deoxy-alpha-D-glucopyranoside + acetate. Functionally, catalyzes the deacetylation of 1D-myo-inositol 2-acetamido-2-deoxy-alpha-D-glucopyranoside (GlcNAc-Ins) in the mycothiol biosynthesis pathway. The polypeptide is 1D-myo-inositol 2-acetamido-2-deoxy-alpha-D-glucopyranoside deacetylase (Mycolicibacterium paratuberculosis (strain ATCC BAA-968 / K-10) (Mycobacterium paratuberculosis)).